Here is a 58-residue protein sequence, read N- to C-terminus: Amyloid-beta precursor protein (58 aa).

The Extracellular segment spans residues 1-33; it reads SEVKMDAEFRHDSGYEVHHQKLVFFAEDVGSNK. Cu(2+) contacts are provided by histidine 11, tyrosine 15, histidine 18, and histidine 19. Histidine 11, tyrosine 15, histidine 18, and histidine 19 together coordinate Zn(2+). A helical membrane pass occupies residues 34–57; sequence GAIIGLMVGGVVIATVIVITLVML. Position 58 (lysine 58) is a topological domain, cytoplasmic.

The protein belongs to the APP family. As to quaternary structure, binds, via its C-terminus, to the PID domain of several cytoplasmic proteins, including APBB family members, the APBA family, MAPK8IP1, SHC1 and NUMB and DAB1. Binding to DAB1 inhibits its serine phosphorylation. Interacts (via NPXY motif) with DAB2 (via PID domain); the interaction is impaired by tyrosine phosphorylation of the NPXY motif. Also interacts with GPCR-like protein BPP, APPBP1, IB1, KNS2 (via its TPR domains), APPBP2 (via BaSS) and DDB1. In vitro, it binds MAPT via the MT-binding domains. Associates with microtubules in the presence of ATP and in a kinesin-dependent manner. Interacts, through a C-terminal domain, with GNAO1. Interacts with CPEB1, ANKS1B and AGER. Interacts with ITM2B. Interacts with ITM2C. Interacts with IDE. Can form homodimers; dimerization is enhanced in the presence of Cu(2+) ions. Can form homodimers; this is promoted by heparin binding. Interacts with SORL1 (via N-terminal ectodomain); this interaction retains APP in the trans-Golgi network and reduces processing into soluble APP-alpha and amyloid-beta peptides. Interacts with PLD3. Interacts with VDAC1. Interacts with NSG1; could regulate APP processing. Amyloid-beta protein 42 interacts with FPR2. Interacts with LRRK2. Interacts (via cytoplasmic domain) with KIF5B. Interacts (via C-terminus) with APBB2/FE65L1 (via C-terminus). Interacts (via intracellular domain) with APBB3. Proteolytically processed under normal cellular conditions. Cleavage either by alpha-secretase, beta-secretase or theta-secretase leads to generation and extracellular release of soluble APP peptides, S-APP-alpha and S-APP-beta, and the retention of corresponding membrane-anchored C-terminal fragments, C80, C83 and C99. Subsequent processing of C80 and C83 by gamma-secretase yields P3 peptides. This is the major secretory pathway and is non-amyloidogenic. Alternatively, presenilin/nicastrin-mediated gamma-secretase processing of C99 releases the amyloid-beta proteins, amyloid-beta protein 40 and amyloid-beta protein 42, major components of amyloid plaques, and the cytotoxic C-terminal fragments, gamma-CTF(50), gamma-CTF(57) and gamma-CTF(59). PSEN1 cleavage is more efficient with C83 than with C99 as substrate (in vitro). Amyloid-beta protein 40 and Amyloid-beta protein 42 are cleaved by ACE. Many other minor amyloid-beta peptides, amyloid-beta 1-X peptides, are found in cerebral spinal fluid (CSF) including the amyloid-beta X-15 peptides, produced from the cleavage by alpha-secretase.

Its subcellular location is the cell membrane. The protein resides in the membrane. The protein localises to the perikaryon. It is found in the cell projection. It localises to the growth cone. Its subcellular location is the clathrin-coated pit. The protein resides in the early endosome. The protein localises to the cytoplasmic vesicle. It is found in the secreted. It localises to the cell surface. Its subcellular location is the nucleus. The protein resides in the cytoplasm. Its function is as follows. Functions as a cell surface receptor and performs physiological functions on the surface of neurons relevant to neurite growth, neuronal adhesion and axonogenesis. Interaction between APP molecules on neighboring cells promotes synaptogenesis. Involved in cell mobility and transcription regulation through protein-protein interactions. Can promote transcription activation through binding to APBB1-KAT5 and inhibit Notch signaling through interaction with Numb. Couples to apoptosis-inducing pathways such as those mediated by G(o) and JIP. Inhibits G(o)-alpha ATPase activity. Acts as a kinesin I membrane receptor, mediating the axonal transport of beta-secretase and presenilin 1. By acting as a kinesin I membrane receptor, plays a role in axonal anterograde transport of cargo towards synapses in axons. May be involved in copper homeostasis/oxidative stress through copper ion reduction. In vitro, copper-metallated APP induces neuronal death directly or is potentiated through Cu(2+)-mediated low-density lipoprotein oxidation. Can regulate neurite outgrowth through binding to components of the extracellular matrix such as heparin and collagen I and IV. Induces a AGER-dependent pathway that involves activation of p38 MAPK, resulting in internalization of amyloid-beta peptide and mitochondrial dysfunction in cultured cortical neurons. Provides Cu(2+) ions for GPC1 which are required for release of nitric oxide (NO) and subsequent degradation of the heparan sulfate chains on GPC1. This Ovis aries (Sheep) protein is Amyloid-beta precursor protein (APP).